We begin with the raw amino-acid sequence, 267 residues long: Regulatory protein RecX (267 aa).

Belongs to the RecX family.

The protein localises to the cytoplasm. Modulates RecA activity. In Staphylococcus carnosus (strain TM300), this protein is Regulatory protein RecX.